We begin with the raw amino-acid sequence, 590 residues long: Aspartate--tRNA ligase (590 aa).

E172 provides a ligand contact to L-aspartate. The aspartate stretch occupies residues 196-199 (QLFK). An L-aspartate-binding site is contributed by R218. ATP-binding positions include 218 to 220 (RDE) and Q227. H449 lines the L-aspartate pocket. E483 serves as a coordination point for ATP. Residue R490 participates in L-aspartate binding. 535-538 (GLDR) is a binding site for ATP.

This sequence belongs to the class-II aminoacyl-tRNA synthetase family. Type 1 subfamily. Homodimer.

Its subcellular location is the cytoplasm. The enzyme catalyses tRNA(Asp) + L-aspartate + ATP = L-aspartyl-tRNA(Asp) + AMP + diphosphate. Catalyzes the attachment of L-aspartate to tRNA(Asp) in a two-step reaction: L-aspartate is first activated by ATP to form Asp-AMP and then transferred to the acceptor end of tRNA(Asp). In Glaesserella parasuis serovar 5 (strain SH0165) (Haemophilus parasuis), this protein is Aspartate--tRNA ligase.